An 876-amino-acid chain; its full sequence is Exonuclease mut-7 homolog (876 aa).

Residues 517 to 571 (GLSLLVQQVLGTALDKTQQLSNWDRRPLCEEQVIYAAADAYCLLEVHQALCREPA) enclose the 3'-5' exonuclease domain. Disordered regions lie at residues 578 to 607 (DLAG…APAA) and 751 to 781 (SHQE…AAPE).

Belongs to the mut-7 family. The cofactor is Mg(2+).

Possesses 3'-5' exoribonuclease activity. Required for 3'-end trimming of AGO1-bound miRNAs. In Homo sapiens (Human), this protein is Exonuclease mut-7 homolog (EXD3).